The primary structure comprises 160 residues: Large ribosomal subunit protein eL21B (160 aa).

Residues 114 to 140 form a disordered region; it reads AKRKEAKAQGKTVQLRRQPAPPATAHF.

It belongs to the eukaryotic ribosomal protein eL21 family. In terms of assembly, component of the large ribosomal subunit (LSU). Mature yeast ribosomes consist of a small (40S) and a large (60S) subunit. The 40S small subunit contains 1 molecule of ribosomal RNA (18S rRNA) and at least 33 different proteins. The large 60S subunit contains 3 rRNA molecules (25S, 5.8S and 5S rRNA) and at least 46 different proteins.

The protein localises to the cytoplasm. In terms of biological role, component of the ribosome, a large ribonucleoprotein complex responsible for the synthesis of proteins in the cell. The small ribosomal subunit (SSU) binds messenger RNAs (mRNAs) and translates the encoded message by selecting cognate aminoacyl-transfer RNA (tRNA) molecules. The large subunit (LSU) contains the ribosomal catalytic site termed the peptidyl transferase center (PTC), which catalyzes the formation of peptide bonds, thereby polymerizing the amino acids delivered by tRNAs into a polypeptide chain. The nascent polypeptides leave the ribosome through a tunnel in the LSU and interact with protein factors that function in enzymatic processing, targeting, and the membrane insertion of nascent chains at the exit of the ribosomal tunnel. This chain is Large ribosomal subunit protein eL21B (rpl2102), found in Schizosaccharomyces pombe (strain 972 / ATCC 24843) (Fission yeast).